Reading from the N-terminus, the 481-residue chain is Cysteine--tRNA ligase (481 aa).

A Zn(2+)-binding site is contributed by cysteine 43. Positions alanine 45 to histidine 55 match the 'HIGH' region motif. Residues cysteine 221, histidine 246, and glutamate 250 each contribute to the Zn(2+) site. Positions lysine 277–serine 281 match the 'KMSKS' region motif. Lysine 280 lines the ATP pocket.

Belongs to the class-I aminoacyl-tRNA synthetase family. In terms of assembly, monomer. Requires Zn(2+) as cofactor.

Its subcellular location is the cytoplasm. It carries out the reaction tRNA(Cys) + L-cysteine + ATP = L-cysteinyl-tRNA(Cys) + AMP + diphosphate. This Mycobacterium sp. (strain KMS) protein is Cysteine--tRNA ligase.